The primary structure comprises 211 residues: Molybdenum cofactor guanylyltransferase (211 aa).

GTP is bound by residues Leu12 to Gly14, Lys25, Asn53, Asp71, and Asp101. Asp101 is a binding site for Mg(2+).

It belongs to the MobA family. In terms of assembly, monomer. Mg(2+) serves as cofactor.

The protein localises to the cytoplasm. The catalysed reaction is Mo-molybdopterin + GTP + H(+) = Mo-molybdopterin guanine dinucleotide + diphosphate. Functionally, transfers a GMP moiety from GTP to Mo-molybdopterin (Mo-MPT) cofactor (Moco or molybdenum cofactor) to form Mo-molybdopterin guanine dinucleotide (Mo-MGD) cofactor. The chain is Molybdenum cofactor guanylyltransferase from Acidovorax ebreus (strain TPSY) (Diaphorobacter sp. (strain TPSY)).